The sequence spans 352 residues: MYFCGVKDRKKDIRALTKEQLQKFFVAEGDKSFRGTQVYEWLWSKAAHSFDDMTNISKETRQMLKDNFVINHIRVDRMQRSSDGTIKNAVKLHDALTVESVLIPTKSRTTACVSSQVGCSLDCQFCATAKLKRMRNLNPDEIYDQVVAIDNESRLYFDRPLSNIVFMGMGEPLMNYNNVMKAVEKITSPEGLGMSPKRITISTSGVPKMIKKLADDEAKIKLAVSLHSARNEVRTQIMPFNETFPLEDLREALEYWYSKTTSRITYEYIVWKDINDTREDAQALVRFCKYVPCKVNLIEYNPIDDGNFQQAAIEATNMYQDMLERNGITVTVRRSRGKDIDAACGQLANKSA.

Glu-99 functions as the Proton acceptor in the catalytic mechanism. The 235-residue stretch at 105–339 (TKSRTTACVS…VTVRRSRGKD (235 aa)) folds into the Radical SAM core domain. A disulfide bond links Cys-112 and Cys-344. The [4Fe-4S] cluster site is built by Cys-119, Cys-123, and Cys-126. S-adenosyl-L-methionine-binding positions include 170–171 (GE), Ser-202, 225–227 (SLH), and Asn-301. Catalysis depends on Cys-344, which acts as the S-methylcysteine intermediate.

This sequence belongs to the radical SAM superfamily. RlmN family. [4Fe-4S] cluster is required as a cofactor.

The protein localises to the cytoplasm. It catalyses the reaction adenosine(2503) in 23S rRNA + 2 reduced [2Fe-2S]-[ferredoxin] + 2 S-adenosyl-L-methionine = 2-methyladenosine(2503) in 23S rRNA + 5'-deoxyadenosine + L-methionine + 2 oxidized [2Fe-2S]-[ferredoxin] + S-adenosyl-L-homocysteine. The enzyme catalyses adenosine(37) in tRNA + 2 reduced [2Fe-2S]-[ferredoxin] + 2 S-adenosyl-L-methionine = 2-methyladenosine(37) in tRNA + 5'-deoxyadenosine + L-methionine + 2 oxidized [2Fe-2S]-[ferredoxin] + S-adenosyl-L-homocysteine. Its function is as follows. Specifically methylates position 2 of adenine 2503 in 23S rRNA and position 2 of adenine 37 in tRNAs. This is Probable dual-specificity RNA methyltransferase RlmN from Christiangramia forsetii (strain DSM 17595 / CGMCC 1.15422 / KT0803) (Gramella forsetii).